The primary structure comprises 438 residues: Chaperone SurA (438 aa).

An N-terminal signal peptide occupies residues 1–28 (MKTMNPYIRHLILLICCLGGMLAQPLSA). PpiC domains follow at residues 181–282 (EEEY…KLVS) and 292–390 (VQQT…QVLE).

The protein localises to the periplasm. The catalysed reaction is [protein]-peptidylproline (omega=180) = [protein]-peptidylproline (omega=0). Chaperone involved in the correct folding and assembly of outer membrane proteins. Recognizes specific patterns of aromatic residues and the orientation of their side chains, which are found more frequently in integral outer membrane proteins. May act in both early periplasmic and late outer membrane-associated steps of protein maturation. This chain is Chaperone SurA, found in Dechloromonas aromatica (strain RCB).